Consider the following 185-residue polypeptide: Small ribosomal subunit protein uS4 (185 aa).

An S4 RNA-binding domain is found at 108 to 170 (RRLQTLVYRK…GKSPFVDASH (63 aa)).

Belongs to the universal ribosomal protein uS4 family. As to quaternary structure, part of the 30S ribosomal subunit. Contacts protein S5. The interaction surface between S4 and S5 is involved in control of translational fidelity.

In terms of biological role, one of the primary rRNA binding proteins, it binds directly to 16S rRNA where it nucleates assembly of the body of the 30S subunit. Functionally, with S5 and S12 plays an important role in translational accuracy. This chain is Small ribosomal subunit protein uS4, found in Methanoregula boonei (strain DSM 21154 / JCM 14090 / 6A8).